A 1167-amino-acid chain; its full sequence is Carbamoyl phosphate synthase large chain (1167 aa).

The carboxyphosphate synthetic domain stretch occupies residues 1–455 (MPRRTDIKSI…SLQKALRGLE (455 aa)). 12 residues coordinate ATP: Arg129, Arg221, Gly227, Gly228, Glu260, Val262, Glu267, Gly293, Val294, His295, Gln337, and Glu351. The 197-residue stretch at 184-380 (LETRWNLGEG…IAKIAAKLAV (197 aa)) folds into the ATP-grasp 1 domain. Positions 337, 351, and 353 each coordinate Mg(2+). Positions 337, 351, and 353 each coordinate Mn(2+). Residues 456-619 (TGLTGLDEIE…PFAGALANEA (164 aa)) are oligomerization domain. The segment at 620 to 1031 (QVSSRKKVVI…AFAKSQLGAG (412 aa)) is carbamoyl phosphate synthetic domain. An ATP-grasp 2 domain is found at 748–960 (QKLLHKLGLS…IAKIAARIMA (213 aa)). Positions 784, 844, 846, 851, 876, 877, 878, 879, 919, and 931 each coordinate ATP. Mg(2+) contacts are provided by Gln919, Glu931, and Asn933. Positions 919, 931, and 933 each coordinate Mn(2+). The MGS-like domain occupies 1032-1167 (VDLPRSGTLF…EVRPLQEYFA (136 aa)). An allosteric domain region spans residues 1032 to 1167 (VDLPRSGTLF…EVRPLQEYFA (136 aa)).

It belongs to the CarB family. As to quaternary structure, composed of two chains; the small (or glutamine) chain promotes the hydrolysis of glutamine to ammonia, which is used by the large (or ammonia) chain to synthesize carbamoyl phosphate. Tetramer of heterodimers (alpha,beta)4. Requires Mg(2+) as cofactor. Mn(2+) serves as cofactor.

It catalyses the reaction hydrogencarbonate + L-glutamine + 2 ATP + H2O = carbamoyl phosphate + L-glutamate + 2 ADP + phosphate + 2 H(+). The catalysed reaction is hydrogencarbonate + NH4(+) + 2 ATP = carbamoyl phosphate + 2 ADP + phosphate + 2 H(+). It functions in the pathway amino-acid biosynthesis; L-arginine biosynthesis; carbamoyl phosphate from bicarbonate: step 1/1. It participates in pyrimidine metabolism; UMP biosynthesis via de novo pathway; (S)-dihydroorotate from bicarbonate: step 1/3. Functionally, large subunit of the glutamine-dependent carbamoyl phosphate synthetase (CPSase). CPSase catalyzes the formation of carbamoyl phosphate from the ammonia moiety of glutamine, carbonate, and phosphate donated by ATP, constituting the first step of 2 biosynthetic pathways, one leading to arginine and/or urea and the other to pyrimidine nucleotides. The large subunit (synthetase) binds the substrates ammonia (free or transferred from glutamine from the small subunit), hydrogencarbonate and ATP and carries out an ATP-coupled ligase reaction, activating hydrogencarbonate by forming carboxy phosphate which reacts with ammonia to form carbamoyl phosphate. This Mesorhizobium japonicum (strain LMG 29417 / CECT 9101 / MAFF 303099) (Mesorhizobium loti (strain MAFF 303099)) protein is Carbamoyl phosphate synthase large chain.